We begin with the raw amino-acid sequence, 209 residues long: MERKVFSKDGQELRTIDLDDGVFNIDVSYGSIYNAINNELANLRVGTASTKTRAEVRGSSKKPWKQKGTGRARVGTRRNPVWVGGGIALGPKPRDYSYKLPKKVKRLAFKSVLSLCASVDDRLKVVENFTIDSGKTKELALIIKNFIKHNGRTVILLGNDDQMIKRAGKNIRDLKILSFNRLRVVDLFYTKNLIALESAINGLNELYVK.

The protein belongs to the universal ribosomal protein uL4 family. Part of the 50S ribosomal subunit.

One of the primary rRNA binding proteins, this protein initially binds near the 5'-end of the 23S rRNA. It is important during the early stages of 50S assembly. It makes multiple contacts with different domains of the 23S rRNA in the assembled 50S subunit and ribosome. In terms of biological role, forms part of the polypeptide exit tunnel. The sequence is that of Large ribosomal subunit protein uL4 from Borrelia duttonii (strain Ly).